We begin with the raw amino-acid sequence, 545 residues long: 1,3-beta-glucanosyltransferase ARB_07487 (545 aa).

The first 19 residues, 1 to 19 (MKFSSLAAATALVAGSVVA), serve as a signal peptide directing secretion. Asn-51 and Asn-69 each carry an N-linked (GlcNAc...) asparagine glycan. Cys-88 and Cys-117 are disulfide-bonded. (1,3-beta-D-glucosyl)n is bound by residues Tyr-106, 133–141 (SEPSTSIIR), Asn-174, and Glu-175. Residue Glu-175 is the Proton donor of the active site. Residue Asn-179 is glycosylated (N-linked (GlcNAc...) asparagine). Positions 216 and 221 each coordinate (1,3-beta-D-glucosyl)n. 5 cysteine pairs are disulfide-bonded: Cys-230/Cys-363, Cys-248/Cys-279, Cys-384/Cys-437, Cys-393/Cys-464, and Cys-412/Cys-419. The active-site Nucleophile is Glu-276. A (1,3-beta-D-glucosyl)n-binding site is contributed by Tyr-308. Positions 493–513 (GTGSVTSAPGSGGNKPDQGAA) are disordered. Ala-512 carries GPI-anchor amidated alanine lipidation. A propeptide spans 513–545 (ASTISAPSVNLGIVKLGAYIFCAVLAGAGMILI) (removed in mature form).

It belongs to the glycosyl hydrolase 72 family. In terms of processing, the GPI-anchor is attached to the protein in the endoplasmic reticulum and serves to target the protein to the cell surface. There, the glucosamine-inositol phospholipid moiety is cleaved off and the GPI-modified mannoprotein is covalently attached via its lipidless GPI glycan remnant to the 1,6-beta-glucan of the outer cell wall layer.

The protein resides in the secreted. It localises to the cell membrane. Its subcellular location is the cell wall. Splits internally a 1,3-beta-glucan molecule and transfers the newly generated reducing end (the donor) to the non-reducing end of another 1,3-beta-glucan molecule (the acceptor) forming a 1,3-beta linkage, resulting in the elongation of 1,3-beta-glucan chains in the cell wall. Involved in cell wall biosynthesis and morphogenesis. This Arthroderma benhamiae (strain ATCC MYA-4681 / CBS 112371) (Trichophyton mentagrophytes) protein is 1,3-beta-glucanosyltransferase ARB_07487.